The following is a 315-amino-acid chain: MTAQTAPAFPHRHLLGIEGLSRPDIESLLERADAAVALSRQVEKKRTTLRGRTQINLFFEPSTRTQSSFELAGKRLGADVMNMSVASSSVKKGETLIDTAATLNAMRPDIIVVRHHAAGAVHLLARKVDCAVVNAGDGAHEHPTQALLDALTIRRNKGGIEGLTVAICGDVLHSRVARSNIILLQALGARVRVIGPSTLLPTGIERFGVEVFTNMREGLKGCDIVMMLRLQRERMNGSFVPSVKEYFRYYGLDGDKLALAKPDALVMHPGPMNRGVEIASDIADGAQSLIREQVEMGVAVRMAVLEALATHLPNG.

Carbamoyl phosphate-binding residues include R64 and T65. Position 92 (K92) interacts with L-aspartate. 3 residues coordinate carbamoyl phosphate: R114, H142, and Q145. L-aspartate contacts are provided by R175 and R229. Residues G270 and P271 each coordinate carbamoyl phosphate.

The protein belongs to the aspartate/ornithine carbamoyltransferase superfamily. ATCase family. In terms of assembly, heterododecamer (2C3:3R2) of six catalytic PyrB chains organized as two trimers (C3), and six regulatory PyrI chains organized as three dimers (R2).

The catalysed reaction is carbamoyl phosphate + L-aspartate = N-carbamoyl-L-aspartate + phosphate + H(+). It participates in pyrimidine metabolism; UMP biosynthesis via de novo pathway; (S)-dihydroorotate from bicarbonate: step 2/3. Functionally, catalyzes the condensation of carbamoyl phosphate and aspartate to form carbamoyl aspartate and inorganic phosphate, the committed step in the de novo pyrimidine nucleotide biosynthesis pathway. The polypeptide is Aspartate carbamoyltransferase catalytic subunit (Methylorubrum populi (strain ATCC BAA-705 / NCIMB 13946 / BJ001) (Methylobacterium populi)).